The primary structure comprises 949 residues: MFGFQRRGLGTPRLQLWLLLLEFWEVGSGQLHYSVSEEAKHGTFVGRIAQDLGLELAELVQRLFRVASKTHGDLLEVNLQNGILFVNSRIDREELCGQSAECSIHLEVIVDRPLQVFHVNVEVKDINDNPPVFSLREQKLLIAESKQSDSRFPLEGASDADIEENALLTYRLSKNEYFSLDSPTNGKQIKRLSLILKKSLDREKTPELNLLLTATDGGKPELTGTVRLLVQVLDVNDNDPEFDKSEYKVSLMENAAKETLVLKLNATDRDEGVNGEVTYSLMSIKPNGRHLFTLDQNNGEVRVNGTLDYEENKFYKIEVQATDKGTPPMAGHCTVWVEILDTNDNSPEVAVTSLSLPVREDAQPSTVIALISVSDRDSGVNGQVTCSLTPHVPFKLVSTFKNYYSLVLDSALDRENVWAYELVVTARDGGSPSLWATARVSVEVADVNDNAPAFAQPEYTVFVKENNPPGCHIFTVSARDADAQENALVSYSLVERRLGDRALSSYVSVHAESGKVYALQPLDHEELELLQFQVSARDAGVPPLSSNVTLQVFVLDENDNAPALLATQAGSAGGAVNKLVPRSVGAGHVVAKVRAVDADSGYNAWLSYELQPAAGGSRIPFRVGLYTGEISTTRALDEADSPRHRLLVLVKDHGEPALTATATVLVSLVESGQAPKASSRTLAGAASPEAALVDVNVYLIIAICVVSSLLVLTLLLYTALWWSATPTEGACAPGKPTLVCSRAVGSWSYSQQRRQRVCSEEGPPKTDLMAFSPSLPLGLNKEEEGERQEPGSNHPGQPRQPNPDWRYSASLRAGMHSSVHLEEAGILRAGPGGPDQQWPTVSSATPEPEAGEVSPPVGAGVNSNSWTFKYGPGNPKQSGPGELPDKFIIPGSPAIISIRQEPTNSQIDKSDFITFGKKEETKKKKKKKKGNKTQEKKEKGNSTTDNSDQ.

A signal peptide spans 1–29 (MFGFQRRGLGTPRLQLWLLLLEFWEVGSG). Cadherin domains follow at residues 30 to 133 (QLHY…PPVF), 157 to 242 (ASDA…DPEF), 243 to 349 (DKSE…SPEV), 350 to 454 (AVTS…APAF), 455 to 564 (AQPE…APAL), and 580 to 677 (VPRS…APKA). At 30-696 (QLHYSVSEEA…SPEAALVDVN (667 aa)) the chain is on the extracellular side. 2 N-linked (GlcNAc...) asparagine glycosylation sites follow: N265 and N304. N547 carries N-linked (GlcNAc...) asparagine glycosylation. A helical transmembrane segment spans residues 697–717 (VYLIIAICVVSSLLVLTLLLY). At 718–949 (TALWWSATPT…GNSTTDNSDQ (232 aa)) the chain is on the cytoplasmic side. PXXP repeat units follow at residues 733-736 (PGKP) and 773-776 (PSLP). Residues 733–893 (PGKPTLVCSR…PDKFIIPGSP (161 aa)) are 6 X 4 AA repeats of P-X-X-P. Disordered stretches follow at residues 753 to 807 (RRQR…DWRY) and 826 to 949 (ILRA…NSDQ). The segment covering 780–789 (NKEEEGERQE) has biased composition (basic and acidic residues). 4 PXXP repeats span residues 795–798 (PGQP), 831–834 (PGGP), 872–875 (PGNP), and 890–893 (PGSP). A compositionally biased stretch (basic and acidic residues) spans 908–922 (DKSDFITFGKKEETK).

Its subcellular location is the cell membrane. Its function is as follows. Potential calcium-dependent cell-adhesion protein. May be involved in the establishment and maintenance of specific neuronal connections in the brain. This chain is Protocadherin alpha-11 (PCDHA11), found in Homo sapiens (Human).